Consider the following 68-residue polypeptide: Beta-toxin Cl13 (68 aa).

One can recognise an LCN-type CS-alpha/beta domain in the interval 1–66 (KEGYLVDYHT…VWPLPNKRCK (66 aa)). Cystine bridges form between C12–C65, C16–C41, C25–C46, and C29–C48. The residue at position 66 (K66) is a Lysine amide.

The protein belongs to the long (4 C-C) scorpion toxin superfamily. Sodium channel inhibitor family. Beta subfamily. As to expression, expressed by the venom gland.

The protein localises to the secreted. Its function is as follows. Beta toxins bind voltage-independently at site-4 of sodium channels (Nav) and shift the voltage of activation toward more negative potentials thereby affecting sodium channel activation and promoting spontaneous and repetitive firing. Inhibits sodium channels Nav1.4/SCN4A, Nav1.5/SCN5A and Nav1.6/SCN8A. Also has a weak inhibitory effect on Nav1.2/SCN2A. Is lethal to mice. This chain is Beta-toxin Cl13, found in Centruroides limpidus (Mexican scorpion).